Consider the following 86-residue polypeptide: Dolichyl-diphosphooligosaccharide--protein glycosyltransferase subunit OST5 (86 aa).

The Lumenal segment spans residues 2–27 (TYEQLYKEFHSSKSFQPFIHLDTQPK). A helical membrane pass occupies residues 28 to 48 (FAICGLIVTLAVLSSALFAVG). Residues 49 to 56 (SKSSYIKK) are Cytoplasmic-facing. A helical transmembrane segment spans residues 57–77 (LFFYTILSVIGSLFAGLTTVF). The Lumenal portion of the chain corresponds to 78 to 86 (ASNSFGVYV).

Belongs to the OST5 family. As to quaternary structure, component of the oligosaccharyltransferase (OST) complex, which appears to exist in two assemblies comprising OST1, OST2, OST4, OST5, STT3, SWP1, WPB1, and either OST3 or OST6. OST assembly occurs through the formation of 3 subcomplexes. Subcomplex 1 contains OST1 and OST5, subcomplex 2 contains STT3, OST3, and OST4, and subcomplex 3 contains OST2, WBP1, and SWP1.

It is found in the endoplasmic reticulum membrane. It participates in protein modification; protein glycosylation. Functionally, subunit of the oligosaccharyl transferase (OST) complex that catalyzes the initial transfer of a defined glycan (Glc(3)Man(9)GlcNAc(2) in eukaryotes) from the lipid carrier dolichol-pyrophosphate to an asparagine residue within an Asn-X-Ser/Thr consensus motif in nascent polypeptide chains, the first step in protein N-glycosylation. N-glycosylation occurs cotranslationally and the complex associates with the Sec61 complex at the channel-forming translocon complex that mediates protein translocation across the endoplasmic reticulum (ER). All subunits are required for a maximal enzyme activity. This is Dolichyl-diphosphooligosaccharide--protein glycosyltransferase subunit OST5 (OST5) from Saccharomyces cerevisiae (strain ATCC 204508 / S288c) (Baker's yeast).